The primary structure comprises 761 residues: MHRFLQPVRERLRSALARYFGSRIMSSTQWTPNMYPSARRSDHIDTYRSETRGEVKVPDPYHWLEEYSEETDKWTSDQEEFTRTYLDSNPDRKKLEDAFRKSMDYPKFSAPFLNDDKRWYWFYNTGLQAQTVICRSKDETLPDFSESDYVGETFFDPNLLSSDGTASLSMYDFSHCGKYFAYGISLSGSDFSTIYVRSTSSPLAPGNNSIRNDDGRLPDELRYVKFSSISWTKDSKGFFYQRYPGTGTVNGQNGIQTQGDRDAMIYYHRIGTSQSDDILVHEDQEHPDWVFGAEVTEDGKYVALYTMKDTSRKNLLWIADLGQNEVGRNMKWNKICNVFDSEYDLIGNDGSLLYIRTNKAAPQYKIVTLDIEKPELGFKEFIPEDPKAYLSQVKIFNKDRLALVYKRNVIGELYVYNNTGSRLMRLARDFVGSMTVTARETEPWFFATLTGFNTPGIVCRYNIQRPEEQRWSVYRTAKVKGLNPNDFEARQVWYDSYDGTKIPMFIVRHKNTQFNGTAPAIQYGYGGFNISINPFFSPTILTFLQKYGAILAVPNIRGGGEFGETWHDAGIREKRANVYDDFIAATQFLVKNKYAAGGKVAINGGSNGGLLVAACVNRAREGTFGAAIAEVGVLDLLKFPKFTIGKAWISDYGDPEDPRDFDYIYTHSPLHNIPKNMVLPPTMLLTADHDDRVVPMHSFKYAAMLQYTLPHNRHPLLLRVDKKAGHGGGKSTEKRLQEAADKWGFAAQSMGLAWKDRQANL.

Residues Ser-606, Asp-690, and His-726 each act as charge relay system in the active site.

The protein belongs to the peptidase S9A family. In terms of assembly, monomer.

The catalysed reaction is Hydrolysis of Pro-|-Xaa &gt;&gt; Ala-|-Xaa in oligopeptides.. In terms of biological role, housekeeping prolyl oligopeptidase (POP) that behaves like a conventional POP by cleaving peptide bonds on the C-terminal side of prolyl residues within peptides that are up to approximately 30 amino acids long. The chain is Prolyl oligopeptidase A from Amanita bisporigera (Destroying angel).